The chain runs to 207 residues: Imidazole glycerol phosphate synthase subunit HisH (207 aa).

The Glutamine amidotransferase type-1 domain occupies 1–206; sequence MMIVIGYDAG…KEYVYENTAR (206 aa). C79 (nucleophile) is an active-site residue. Residues H181 and E183 contribute to the active site.

In terms of assembly, heterodimer of HisH and HisF.

Its subcellular location is the cytoplasm. It catalyses the reaction 5-[(5-phospho-1-deoxy-D-ribulos-1-ylimino)methylamino]-1-(5-phospho-beta-D-ribosyl)imidazole-4-carboxamide + L-glutamine = D-erythro-1-(imidazol-4-yl)glycerol 3-phosphate + 5-amino-1-(5-phospho-beta-D-ribosyl)imidazole-4-carboxamide + L-glutamate + H(+). It carries out the reaction L-glutamine + H2O = L-glutamate + NH4(+). The protein operates within amino-acid biosynthesis; L-histidine biosynthesis; L-histidine from 5-phospho-alpha-D-ribose 1-diphosphate: step 5/9. Its function is as follows. IGPS catalyzes the conversion of PRFAR and glutamine to IGP, AICAR and glutamate. The HisH subunit catalyzes the hydrolysis of glutamine to glutamate and ammonia as part of the synthesis of IGP and AICAR. The resulting ammonia molecule is channeled to the active site of HisF. This chain is Imidazole glycerol phosphate synthase subunit HisH, found in Streptococcus gordonii (strain Challis / ATCC 35105 / BCRC 15272 / CH1 / DL1 / V288).